Consider the following 2325-residue polypeptide: Protein sidekick homolog (2325 aa).

The signal sequence occupies residues 1–26 (MRNRLLLIFYTTTVLWTIGYTQLVLG). The Extracellular segment spans residues 27-2019 (KPPIFQDGGS…IPDDPFYTTW (1993 aa)). Ig-like C2-type domains lie at 28–105 (PPIF…AAIS), 217–319 (PSLQ…AYMT), and 324–397 (PILK…ADLA). Intrachain disulfides connect C52–C94, C247–C301, and C345–C386. N-linked (GlcNAc...) asparagine glycosylation occurs at N407. Ig-like C2-type domains are found at residues 456 to 544 (PSQK…VQVN) and 547 to 638 (SLIE…AMLQ). Intrachain disulfides connect C480/C528 and C568/C622. N-linked (GlcNAc...) asparagine glycans are attached at residues N632, N655, N807, N868, N932, and N1016. Fibronectin type-III domains are found at residues 645-751 (MPER…MPQQ), 756-853 (APRN…TSEG), 858-957 (APKN…TEED), 961-1055 (SVDE…VPPE), 1059-1154 (RPSM…TLQT), 1159-1254 (PSQR…TYES), 1259-1359 (SPRN…TMED), 1363-1457 (PPES…SSVR), 1463-1566 (APAP…TLPS), 1571-1671 (QPIS…VGYS), 1673-1775 (PKRN…DKPG), 1776-1872 (PVGI…SKDG), and 1873-2004 (PPPP…TEQL). Positions 1036 to 1059 (TRKGDGPVEETKFESGVPPELPGR) are disordered. A compositionally biased stretch (basic and acidic residues) spans 1037–1048 (RKGDGPVEETKF). N-linked (GlcNAc...) asparagine glycosylation is present at N1107. Residues 1137–1161 (KGRGAPSEPSRSFETLQTNPDTPSQ) are disordered. The span at 1145–1161 (PSRSFETLQTNPDTPSQ) shows a compositional bias: polar residues. An N-linked (GlcNAc...) asparagine glycan is attached at N1614. 2 disordered regions span residues 1857-1884 (GEQR…ITSG) and 1918-1947 (PANG…ATST). Residue N1863 is glycosylated (N-linked (GlcNAc...) asparagine). The span at 1935–1947 (AKSAAQTAAATST) shows a compositional bias: low complexity. The chain crosses the membrane as a helical span at residues 2020 to 2040 (WFMALVAMGAFVLIVIIIAIL). Topologically, residues 2041 to 2325 (CVTGSSAKYR…NLTTGFSSFV (285 aa)) are cytoplasmic. 4 disordered regions span residues 2080–2113 (NMTR…SVLG), 2164–2187 (TAYV…PTRS), 2202–2226 (RGHI…LQQP), and 2285–2325 (ILTG…SSFV). Polar residues predominate over residues 2091–2100 (PGTTQSWVSD). A compositionally biased stretch (low complexity) spans 2215-2226 (GSQPQGSPLQQP). 2 stretches are compositionally biased toward polar residues: residues 2294–2305 (AGRSSTTDSTSE) and 2313–2325 (ATPN…SSFV).

The protein belongs to the sidekick family.

The protein resides in the membrane. Its function is as follows. Cell adhesion protein. The protein is Protein sidekick homolog (rig-4) of Caenorhabditis elegans.